We begin with the raw amino-acid sequence, 170 residues long: MNLEKFIKDVKDFPKQGINFKDISPLLANGQALNYTIKKMAELAKDADIIVGPDARGFLFGTPTAAFLSKPFIMVRKKGKLPGEVIKHEYDLEYGKDILEIQKGVIKPGDKAIIIDDVLATGGTTKAIIDLLESQGAKVIKIILLLELTNLNGRSKFGSLQVESLVKVSV.

It belongs to the purine/pyrimidine phosphoribosyltransferase family. In terms of assembly, homodimer.

Its subcellular location is the cytoplasm. It catalyses the reaction AMP + diphosphate = 5-phospho-alpha-D-ribose 1-diphosphate + adenine. Its pathway is purine metabolism; AMP biosynthesis via salvage pathway; AMP from adenine: step 1/1. Its function is as follows. Catalyzes a salvage reaction resulting in the formation of AMP, that is energically less costly than de novo synthesis. This chain is Adenine phosphoribosyltransferase, found in Mycoplasmopsis pulmonis (strain UAB CTIP) (Mycoplasma pulmonis).